A 299-amino-acid polypeptide reads, in one-letter code: HTH-type transcriptional regulator ArgP (299 aa).

The HTH lysR-type domain maps to 2 to 58 (FDYKLLSALAAVIEQAGFERAAQVLGLSQSAISQRIKLLEARVGQPVLVRVTPPAPT). A DNA-binding region (H-T-H motif) is located at residues 19 to 38 (FERAAQVLGLSQSAISQRIK).

The protein belongs to the LysR transcriptional regulatory family. In terms of assembly, homodimer.

Controls the transcription of genes involved in arginine and lysine metabolism. The chain is HTH-type transcriptional regulator ArgP from Pseudomonas fluorescens (strain ATCC BAA-477 / NRRL B-23932 / Pf-5).